Here is a 265-residue protein sequence, read N- to C-terminus: Interleukin-1 alpha (265 aa).

Residues Met1–Arg108 constitute a propeptide that is removed on maturation. Residue Lys78 is modified to N6-acetyllysine. The interval Lys78 to Leu82 is nuclear localization signal (NLS). Position 83 is a phosphoserine (Ser83). N-linked (GlcNAc...) asparagine glycosylation is found at Asn98 and Asn137.

It belongs to the IL-1 family. Monomer. Interacts with TMED10; the interaction mediates the translocation from the cytoplasm into the ERGIC (endoplasmic reticulum-Golgi intermediate compartment) and thereby secretion. Interacts with IL1R1. Interacts with S100A13; this interaction is the first step in the export of IL1A, followed by direct translocation of this complex across the plasma membrane. Acetylated within its nuclear localization sequence, which impacts subcellular localization. Post-translationally, proteolytic processed by CAPN1 in a calcium-dependent manner. Cleavage from 31 kDa precursor to 18 kDa biologically active molecules. In terms of processing, phosphorylated. Phosphorylation greatly enhances susceptibility to digestion and promotes the conversion of pre-IL1A alpha to the biologically active IL1A.

The protein resides in the nucleus. The protein localises to the cytoplasm. It is found in the secreted. Its function is as follows. Cytokine constitutively present intracellularly in nearly all resting non-hematopoietic cells that plays an important role in inflammation and bridges the innate and adaptive immune systems. After binding to its receptor IL1R1 together with its accessory protein IL1RAP, forms the high affinity interleukin-1 receptor complex. Signaling involves the recruitment of adapter molecules such as MYD88, IRAK1 or IRAK4. In turn, mediates the activation of NF-kappa-B and the three MAPK pathways p38, p42/p44 and JNK pathways. Within the cell, acts as an alarmin and cell death results in its liberation in the extracellular space after disruption of the cell membrane to induce inflammation and alert the host to injury or damage. In addition to its role as a danger signal, which occurs when the cytokine is passively released by cell necrosis, directly senses DNA damage and acts as signal for genotoxic stress without loss of cell integrity. The chain is Interleukin-1 alpha (IL1A) from Canis lupus familiaris (Dog).